A 227-amino-acid polypeptide reads, in one-letter code: MTIKQLHESDRPREKMIRLGARCLTDAELLAILIGSGNDRQTAIQLAQEILAKMDNSLPRLAKCDIQELTGSFRGMGPAKAVTVMAAMELSRRIPSQEMPRRESITDSRMAYRTISPFLTDLPQEEMWVLLLNQSGKIISMENLSRGGVSETSADVRLIMHKAVSHLASAIILAHNHPSGTVRPSEQDIQLTQRVQKAATLLGFRLNDHLIIGDDGAYFSFADEGLL.

One can recognise an MPN domain in the interval 104–227 (SITDSRMAYR…YFSFADEGLL (124 aa)). Zn(2+) contacts are provided by histidine 175, histidine 177, and aspartate 188. Residues 175 to 188 (HNHPSGTVRPSEQD) carry the JAMM motif motif.

Belongs to the UPF0758 family.

The chain is UPF0758 protein PG_0894 from Porphyromonas gingivalis (strain ATCC BAA-308 / W83).